The following is a 332-amino-acid chain: Anthranilate phosphoribosyltransferase (332 aa).

5-phospho-alpha-D-ribose 1-diphosphate-binding positions include G79, 82–83 (GD), S87, 89–92 (NIST), 107–115 (KHGNRSVSS), and S119. G79 contributes to the anthranilate binding site. S91 provides a ligand contact to Mg(2+). N110 provides a ligand contact to anthranilate. Residue R165 participates in anthranilate binding. Residues D223 and E224 each contribute to the Mg(2+) site.

Belongs to the anthranilate phosphoribosyltransferase family. Homodimer. Mg(2+) is required as a cofactor.

It catalyses the reaction N-(5-phospho-beta-D-ribosyl)anthranilate + diphosphate = 5-phospho-alpha-D-ribose 1-diphosphate + anthranilate. The protein operates within amino-acid biosynthesis; L-tryptophan biosynthesis; L-tryptophan from chorismate: step 2/5. Its function is as follows. Catalyzes the transfer of the phosphoribosyl group of 5-phosphorylribose-1-pyrophosphate (PRPP) to anthranilate to yield N-(5'-phosphoribosyl)-anthranilate (PRA). This chain is Anthranilate phosphoribosyltransferase, found in Photorhabdus laumondii subsp. laumondii (strain DSM 15139 / CIP 105565 / TT01) (Photorhabdus luminescens subsp. laumondii).